The following is a 3086-amino-acid chain: Genome polyprotein (3086 aa).

The region spanning 122-256 (RRSKILACDL…RAGIHTIKHY (135 aa)) is the Peptidase S30 domain. Residues H173, D182, and S215 each act as for P1 proteinase activity in the active site. Residues 590–711 (YYVAPEGYCY…TGEMLDYNVG (122 aa)) form the Peptidase C6 domain. Active-site for helper component proteinase activity residues include C598 and H670. The Helicase ATP-binding domain maps to 1189 to 1341 (ISSDTANAEF…PMFPVRVSEA (153 aa)). 1202-1209 (GGVGTGKS) serves as a coordination point for ATP. The DEAH box motif lies at 1291-1294 (DECH). O-(5'-phospho-RNA)-tyrosine is present on Y1870. Residues 1970–1990 (HDGELRQSRPSRPIQKDQVPA) are disordered. In terms of domain architecture, Peptidase C4 spans 2000–2217 (SKSIAKGLRD…VNYGTMDLTS (218 aa)). Residues H2045, D2080, and C2149 each act as for nuclear inclusion protein A activity in the active site. The 125-residue stretch at 2482–2606 (WDYFDADGSR…AVEPSLSDKI (125 aa)) folds into the RdRp catalytic domain. Residues 2762 to 2821 (TAASSAATQTSTTSPTVTSTSGASTSTSSGTTSAPLASTTPPVSATTTPSTGTTAPTTPT) show a composition bias toward low complexity. Residues 2762 to 2822 (TAASSAATQT…GTTAPTTPTV (61 aa)) form a disordered region. Residue T3069 is modified to Phosphothreonine.

Belongs to the potyviridae genome polyprotein family. Post-translationally, VPg is uridylylated by the polymerase and is covalently attached to the 5'-end of the genomic RNA. This uridylylated form acts as a nucleotide-peptide primer for the polymerase. Genome polyprotein of potyviruses undergoes post-translational proteolytic processing by the main proteinase NIa-pro resulting in the production of at least ten individual proteins. The P1 proteinase and the HC-pro cleave only their respective C-termini autocatalytically. 6K1 is essential for proper proteolytic separation of P3 from CI.

It is found in the host cytoplasmic vesicle membrane. The protein resides in the host cytoplasmic vesicle. The protein localises to the virion. It carries out the reaction RNA(n) + a ribonucleoside 5'-triphosphate = RNA(n+1) + diphosphate. The enzyme catalyses Hydrolyzes glutaminyl bonds, and activity is further restricted by preferences for the amino acids in P6 - P1' that vary with the species of potyvirus, e.g. Glu-Xaa-Xaa-Tyr-Xaa-Gln-|-(Ser or Gly) for the enzyme from tobacco etch virus. The natural substrate is the viral polyprotein, but other proteins and oligopeptides containing the appropriate consensus sequence are also cleaved.. The catalysed reaction is Hydrolyzes a Gly-|-Gly bond at its own C-terminus, commonly in the sequence -Tyr-Xaa-Val-Gly-|-Gly, in the processing of the potyviral polyprotein.. Its function is as follows. Required for aphid transmission and also has proteolytic activity. Only cleaves a Gly-Gly dipeptide at its own C-terminus. Interacts with virions and aphid stylets. Acts as a suppressor of RNA-mediated gene silencing, also known as post-transcriptional gene silencing (PTGS), a mechanism of plant viral defense that limits the accumulation of viral RNAs. May have RNA-binding activity. Functionally, has helicase activity. It may be involved in replication. Indispensable for virus replication. Reduces the abundance of host transcripts related to jasmonic acid biosynthesis therefore altering the host defenses. In order to increase its own stability, decreases host protein degradation pathways. In terms of biological role, indispensable for virus replication. Its function is as follows. Mediates the cap-independent, EIF4E-dependent translation of viral genomic RNAs. Binds to the cap-binding site of host EIF4E and thus interferes with the host EIF4E-dependent mRNA export and translation. VPg-RNA directly binds EIF4E and is a template for transcription. Also forms trimeric complexes with EIF4E-EIF4G, which are templates for translation. Functionally, has RNA-binding and proteolytic activities. An RNA-dependent RNA polymerase that plays an essential role in the virus replication. In terms of biological role, involved in aphid transmission, cell-to-cell and systemis movement, encapsidation of the viral RNA and in the regulation of viral RNA amplification. This chain is Genome polyprotein, found in Dactylis glomerata (Orchard grass).